Consider the following 306-residue polypeptide: MELTFLGTSAGVPTRTRNMTSIILNLQQPTRAEMWLFDCGEGTQHQFLHTPYHPGKLNKIFITHLHGDHLFGLPGLLCSRSMQGNSLPLTLYGPKGLKEFVETALRLSGSWTDYPLTIIEVGPGLVFDEEGYRVTAYPLSHPVECYGYRIAQHDKPGTLDAAQLIADGVPPGPLFHQLKRGQRVELADGRVIDGSRYLGPSTPGKTLAIFGDTAPCPQALEMARGADVMVHETTLEQAMAEKANSRGHSSSQQTAALAKEAGVGTLIATHFSSRYDAEGCLRMLAECREIFPNTLLAEDFMVYKMA.

Positions 64, 66, 68, 69, 141, 212, and 270 each coordinate Zn(2+). The active-site Proton acceptor is the Asp-68.

This sequence belongs to the RNase Z family. RNase BN subfamily. As to quaternary structure, homodimer. It depends on Zn(2+) as a cofactor.

Zinc phosphodiesterase, which has both exoribonuclease and endoribonuclease activities. This is Ribonuclease BN from Klebsiella pneumoniae subsp. pneumoniae (strain ATCC 700721 / MGH 78578).